The primary structure comprises 490 residues: Betaine aldehyde dehydrogenase (490 aa).

Positions 26, 27, and 93 each coordinate K(+). G150–W152 is a binding site for NAD(+). The Charge relay system role is filled by K162. K176–E179 contributes to the NAD(+) binding site. V180 is a K(+) binding site. G230 to T233 provides a ligand contact to NAD(+). Residue L246 participates in K(+) binding. The Proton acceptor role is filled by E252. Residues G254, C286, and E387 each contribute to the NAD(+) site. C286 functions as the Nucleophile in the catalytic mechanism. Position 286 is a cysteine sulfenic acid (-SOH) (C286). K457 and G460 together coordinate K(+). E464 (charge relay system) is an active-site residue.

The protein belongs to the aldehyde dehydrogenase family. As to quaternary structure, dimer of dimers. K(+) serves as cofactor.

The catalysed reaction is betaine aldehyde + NAD(+) + H2O = glycine betaine + NADH + 2 H(+). Its pathway is amine and polyamine biosynthesis; betaine biosynthesis via choline pathway; betaine from betaine aldehyde: step 1/1. Involved in the biosynthesis of the osmoprotectant glycine betaine. Catalyzes the irreversible oxidation of betaine aldehyde to the corresponding acid. The polypeptide is Betaine aldehyde dehydrogenase (Pseudomonas aeruginosa (strain UCBPP-PA14)).